Here is a 78-residue protein sequence, read N- to C-terminus: Small ribosomal subunit protein bS16c (78 aa).

It belongs to the bacterial ribosomal protein bS16 family.

The protein localises to the plastid. The protein resides in the chloroplast. This Daucus carota (Wild carrot) protein is Small ribosomal subunit protein bS16c.